The chain runs to 130 residues: MAQVQFYGTGRRKNAVARVYLVPGEGKVVVNNKEVLDYFGRKTLDMVVRQPLELTNTTGRFDVLVKVVGGGVSGQAGATRHGLARALVQADPNLRPVLKRAGFLTRDPRMKERRKYGLKKARRAPQFSKR.

Positions proline 108–arginine 130 are disordered. The segment covering lysine 111 to arginine 130 has biased composition (basic residues).

This sequence belongs to the universal ribosomal protein uS9 family.

The protein is Small ribosomal subunit protein uS9 of Desulforamulus reducens (strain ATCC BAA-1160 / DSM 100696 / MI-1) (Desulfotomaculum reducens).